Consider the following 569-residue polypeptide: DNA-binding protein eta2 (569 aa).

2 disordered regions span residues 1–26 and 133–159; these read MMLA…TLSC and KRKI…AKKR. Residues 9–26 show a composition bias toward polar residues; the sequence is INENQGTRSNLESPTLSC. Ser21 is subject to Phosphoserine. 2 Myb-like domains span residues 322 to 371 and 377 to 459; these read LDPK…RFVV and ETID…EKTI. The disordered stretch occupies residues 459–487; sequence IASYSSNQRQEEDQGKKRKKRKKKKSKGK. Basic residues predominate over residues 474-487; it reads KKRKKRKKKKSKGK.

It is found in the nucleus. The protein is DNA-binding protein eta2 (eta2) of Schizosaccharomyces pombe (strain 972 / ATCC 24843) (Fission yeast).